A 455-amino-acid chain; its full sequence is Nuclear receptor subfamily 6 group A member 1-B (455 aa).

The segment at residues 38 to 113 (ERWCLICGDR…MGMNRKAIRE (76 aa)) is a DNA-binding region (nuclear receptor). 2 consecutive NR C4-type zinc fingers follow at residues 41–61 (CLIC…CEGC) and 77–96 (CNRD…CQYC). The tract at residues 145-173 (EGSDLSDSWSHGYSNHSSPGNSLSEGGQS) is disordered. The segment covering 149–165 (LSDSWSHGYSNHSSPGN) has biased composition (polar residues). Positions 215-446 (QTHTLTGQIL…YSCTTNQNPW (232 aa)) constitute an NR LBD domain.

Belongs to the nuclear hormone receptor family. NR6 subfamily. In terms of assembly, homodimer.

It is found in the nucleus. Functionally, probable orphan nuclear receptor. Binds to a response element containing repeats of the motif 5'-AGGTCA-3'. The protein is Nuclear receptor subfamily 6 group A member 1-B of Danio rerio (Zebrafish).